A 285-amino-acid chain; its full sequence is MFKDFFNRTKKKKYLTVQDSKNNDVPAGIMTKCPKCKKIMYTKELAENLNVCFNCDHHIALTAYKRIEAISDEGSFTEFDKGMTSANPLDFPSYLEKIEKDQQKTGLKEAVVTGTAQLDGMKFGVAVMDSRFRMGSMGSVIGEKICRIIDYCTENRLPFILFSASGGARMQEGIISLMQMGKTSVSLKRHSDAGLLYISYLTHPTTGGVSASFASVGDINLSEPKALIGFAGRRVIEQTINEKLPDDFQTAEFLLEHGQLDKVVHRNNMRQTLSEILKIHQEVTK.

A CoA carboxyltransferase N-terminal domain is found at 29-285 (IMTKCPKCKK…ILKIHQEVTK (257 aa)). 4 residues coordinate Zn(2+): Cys33, Cys36, Cys52, and Cys55. Residues 33 to 55 (CPKCKKIMYTKELAENLNVCFNC) form a C4-type zinc finger.

The protein belongs to the AccD/PCCB family. As to quaternary structure, acetyl-CoA carboxylase is a heterohexamer composed of biotin carboxyl carrier protein (AccB), biotin carboxylase (AccC) and two subunits each of ACCase subunit alpha (AccA) and ACCase subunit beta (AccD). Zn(2+) serves as cofactor.

Its subcellular location is the cytoplasm. The enzyme catalyses N(6)-carboxybiotinyl-L-lysyl-[protein] + acetyl-CoA = N(6)-biotinyl-L-lysyl-[protein] + malonyl-CoA. It functions in the pathway lipid metabolism; malonyl-CoA biosynthesis; malonyl-CoA from acetyl-CoA: step 1/1. Its function is as follows. Component of the acetyl coenzyme A carboxylase (ACC) complex. Biotin carboxylase (BC) catalyzes the carboxylation of biotin on its carrier protein (BCCP) and then the CO(2) group is transferred by the transcarboxylase to acetyl-CoA to form malonyl-CoA. In Staphylococcus aureus (strain MSSA476), this protein is Acetyl-coenzyme A carboxylase carboxyl transferase subunit beta.